The primary structure comprises 343 residues: MMPPRLPGGHGGAMRSRSSSSGHHLNTTFHKRRRRRQQHHIGGSHISISHGSYLALLLLSTTCSLVATSASSSSSAANTDIAPPDPPPVSQVSIASSSPCAPQHWWDSQRDRCTPCTRCQGEMIPLRPCQLHTDTICGSIYDLKIDWVVLAKTEPNWKERRKSSEYEHFEHNAPLQHLTHEQLQQLHEEAAAAWVLDWQTGVLYVAVLTCLVFFSVAACILIHHMRQWRRMERRLDQDVEELSTKLMAKLAEVQSLDGGTFFIGNADALRGLPASAATTHPATTQSGIFQPQHVLLPEKRGKHQERRILKTLQPGNVYIEESNAGLGGMGVGLGVRGCSGLKG.

Disordered stretches follow at residues 1 to 44 and 74 to 96; these read MMPP…IGGS and SSAANTDIAPPDPPPVSQVSIAS. The N-terminal stretch at 1-76 is a signal peptide; that stretch reads MMPPRLPGGH…ATSASSSSSA (76 aa). The segment covering 13-24 has biased composition (low complexity); it reads AMRSRSSSSGHH. Residues 29–39 are compositionally biased toward basic residues; sequence FHKRRRRRQQH. At 77 to 201 the chain is on the extracellular side; sequence ANTDIAPPDP…AAWVLDWQTG (125 aa). Residues 99 to 137 form a TNFR-Cys repeat; sequence PCAPQHWWDSQRDRCTPCTRCQGEMIPLRPCQLHTDTIC. 3 disulfides stabilise this stretch: C100–C113, C116–C129, and C119–C137. Residues 202–222 form a helical membrane-spanning segment; sequence VLYVAVLTCLVFFSVAACILI. Residues 223-343 lie on the Cytoplasmic side of the membrane; it reads HHMRQWRRME…GVRGCSGLKG (121 aa). Residues 225–257 adopt a coiled-coil conformation; the sequence is MRQWRRMERRLDQDVEELSTKLMAKLAEVQSLD.

Monomer. Interacts (via extracellular cystein-rich domain) with egr (via secreted TNF-homology soluble form); forms heterohexamers when 3 copies associate with egr trimers. Interacts with Traf6. Interacts with Moe. As to expression, expressed in the adult midgut; under normal conditions expressed at higher levels than the other TNF receptor grnd.

The protein localises to the cell membrane. Its subcellular location is the cytoplasmic vesicle membrane. In terms of biological role, receptor for egr. Involved in induction of apoptosis by triggering JNK signaling. Mediates the tumor suppressor activity of egr which eliminates oncogenic cells from epithelia, thereby maintaining epithelial integrity. Following UV-induced epidermal damage, binds to egr released from apoptotic epidermal cells and plays a role in development of thermal allodynia, a responsiveness to subthreshold thermal stimuli which are not normally perceived as noxious. Together with Moe, involved in control of axon targeting of R8 and R2-R5 photoreceptors, independent of egr. The chain is Tumor necrosis factor receptor superfamily member wgn from Drosophila melanogaster (Fruit fly).